The sequence spans 404 residues: Spore development regulator RYP2 (404 aa).

3 disordered regions span residues 1-46 (MSAP…RKAV), 200-231 (LLKR…SSQQ), and 382-404 (SGQS…PAWG). A Velvet domain is found at 17–194 (LQSADFRLTV…ADQGVKLRIR (178 aa)). Residues 29–46 (NPERARVAGGKEKERKAV) are compositionally biased toward basic and acidic residues. Residues 382 to 397 (SGQSFSQSAGHMQSPS) are compositionally biased toward polar residues.

It belongs to the velvet family. VosA subfamily. Forms a heterodimeric complex with RYP3; the formation of the RYP2-RYP3 complex is light-dependent.

The protein resides in the nucleus. In terms of biological role, component of the RYP2-RYP3 heterodimeric complex that plays a dual role in activating genes associated with spore maturation and repressing certain development-associated genes. The complex binds DNA through the DNA-binding domain of vosA that recognizes an 11-nucleotide consensus sequence 5'-CTGGCCGCGGC-3' consisting of two motifs in the promoters of key developmental regulatory genes. Required for viable spore production and regulation of sporulation in response to temperature and for the switch to yeast-form in the presence of host cells. This Ajellomyces capsulatus (Darling's disease fungus) protein is Spore development regulator RYP2.